The following is a 120-amino-acid chain: Putative membrane protein insertion efficiency factor (120 aa).

Residues 93–120 form a disordered region; sequence GRSCQTDVDGANDDWNPASKRGERESFV.

This sequence belongs to the UPF0161 family.

It localises to the cell membrane. Could be involved in insertion of integral membrane proteins into the membrane. In Mycobacterium bovis (strain ATCC BAA-935 / AF2122/97), this protein is Putative membrane protein insertion efficiency factor.